Reading from the N-terminus, the 499-residue chain is Maturase K (499 aa).

It belongs to the intron maturase 2 family. MatK subfamily.

The protein resides in the plastid. It localises to the chloroplast. In terms of biological role, usually encoded in the trnK tRNA gene intron. Probably assists in splicing its own and other chloroplast group II introns. In Gymnocladus dioicus (Kentucky coffee tree), this protein is Maturase K.